A 717-amino-acid polypeptide reads, in one-letter code: Radial spoke head protein 6 homolog A (717 aa).

Disordered stretches follow at residues 1–65, 503–523, 563–588, and 672–717; these read MGDL…SLSQ, SEEEGDEEEEGGAGRDSYEEN, TEEEEDLGEEEEKADEGPEEVEQEVG, and GPEI…ETDD. 3 stretches are compositionally biased toward acidic residues: residues 503–513, 564–585, and 700–717; these read SEEEGDEEEEG, EEEEDLGEEEEKADEGPEEVEQ, and TEEEEEGEEEEEGEETDD.

The protein belongs to the flagellar radial spoke RSP4/6 family. As to quaternary structure, component of the axonemal radial spoke 1 (RS1) and 2 (RS2) complexes, at least composed of spoke head proteins RSPH1, RSPH3, RSPH9 and the cilia-specific component RSPH4A or sperm-specific component RSPH6A, spoke stalk proteins RSPH14, DNAJB13, DYDC1, ROPN1L and NME5, and the RS1 complex-specific anchor protein IQUB. Interacts with RSPH1. Interacts with RSPH3B. Interacts with RSPH4A. Interacts with RSPH9. Interacts with RSPH10B. In terms of processing, phosphorylated by PKA. Phosphorylation increases in capacitated sperm.

Its subcellular location is the cytoplasm. The protein resides in the cytoskeleton. It localises to the flagellum axoneme. Functionally, functions as part of radial spoke complexes in the axoneme of sperm flagella that play an important part in motility. The triple radial spokes (RS1, RS2 and RS3) are required to modulate beating of the sperm flagellum. The protein is Radial spoke head protein 6 homolog A of Homo sapiens (Human).